The following is a 396-amino-acid chain: Ribosomal RNA large subunit methyltransferase I (396 aa).

The PUA domain maps to 2–81 (SVRLVLAKGR…ESIDIAFFTR (80 aa)).

It belongs to the methyltransferase superfamily. RlmI family.

The protein resides in the cytoplasm. It carries out the reaction cytidine(1962) in 23S rRNA + S-adenosyl-L-methionine = 5-methylcytidine(1962) in 23S rRNA + S-adenosyl-L-homocysteine + H(+). In terms of biological role, specifically methylates the cytosine at position 1962 (m5C1962) of 23S rRNA. The polypeptide is Ribosomal RNA large subunit methyltransferase I (Escherichia coli (strain SMS-3-5 / SECEC)).